We begin with the raw amino-acid sequence, 254 residues long: Hydroxyacylglutathione hydrolase (254 aa).

Zn(2+) contacts are provided by histidine 53, histidine 55, aspartate 57, histidine 58, histidine 111, aspartate 128, and histidine 166.

It belongs to the metallo-beta-lactamase superfamily. Glyoxalase II family. As to quaternary structure, monomer. Zn(2+) is required as a cofactor.

The catalysed reaction is an S-(2-hydroxyacyl)glutathione + H2O = a 2-hydroxy carboxylate + glutathione + H(+). Its pathway is secondary metabolite metabolism; methylglyoxal degradation; (R)-lactate from methylglyoxal: step 2/2. In terms of biological role, thiolesterase that catalyzes the hydrolysis of S-D-lactoyl-glutathione to form glutathione and D-lactic acid. This chain is Hydroxyacylglutathione hydrolase, found in Aeromonas hydrophila subsp. hydrophila (strain ATCC 7966 / DSM 30187 / BCRC 13018 / CCUG 14551 / JCM 1027 / KCTC 2358 / NCIMB 9240 / NCTC 8049).